A 258-amino-acid polypeptide reads, in one-letter code: MKQFIVIGNWKMYKTFTETLNFFDEFAIEYKKFRKANPQLIPYIDNNVFGVAPSQCNLTAYFTNRVPELKLCSQNMSKNEEGAFTGEVSARMLQDINVSYALCGHSERRRYHTNHENDESTHLKIKQSVKYDITPIICIGESKEDRDAGRTEAAIHKQLQILLDEVNIHKVIIAYEPVWSIGTGITPTPEEVENVSALIHKLTSPEVPVLYGGSVNENNINDFTKLPNLNGFLVGSASLKIDKFLKLISVNSDGIMPK.

A substrate-binding site is contributed by 9 to 11 (NWK). His-105 (electrophile) is an active-site residue. Catalysis depends on Glu-176, which acts as the Proton acceptor. Substrate is bound by residues Gly-182 and Ser-214.

The protein belongs to the triosephosphate isomerase family. Homodimer.

It localises to the cytoplasm. It carries out the reaction D-glyceraldehyde 3-phosphate = dihydroxyacetone phosphate. It functions in the pathway carbohydrate biosynthesis; gluconeogenesis. It participates in carbohydrate degradation; glycolysis; D-glyceraldehyde 3-phosphate from glycerone phosphate: step 1/1. Functionally, involved in the gluconeogenesis. Catalyzes stereospecifically the conversion of dihydroxyacetone phosphate (DHAP) to D-glyceraldehyde-3-phosphate (G3P). The protein is Triosephosphate isomerase of Mycoplasmopsis agalactiae (strain NCTC 10123 / CIP 59.7 / PG2) (Mycoplasma agalactiae).